Reading from the N-terminus, the 104-residue chain is N(4)-acetylcytidine amidohydrolase (104 aa).

The ASCH domain occupies 7–93 (MTFFSRFEAD…EVIQEIYPGI (87 aa)). K22 (proton acceptor) is an active-site residue. Catalysis depends on T25, which acts as the Nucleophile. Catalysis depends on E75, which acts as the Proton donor.

The protein belongs to the N(4)-acetylcytidine amidohydrolase family.

The enzyme catalyses N(4)-acetylcytidine + H2O = cytidine + acetate + H(+). It carries out the reaction N(4)-acetyl-2'-deoxycytidine + H2O = 2'-deoxycytidine + acetate + H(+). It catalyses the reaction N(4)-acetylcytosine + H2O = cytosine + acetate + H(+). In terms of biological role, catalyzes the hydrolysis of N(4)-acetylcytidine (ac4C). The protein is N(4)-acetylcytidine amidohydrolase of Vibrio vulnificus (strain YJ016).